Reading from the N-terminus, the 418-residue chain is Serine--tRNA ligase (418 aa).

An L-serine-binding site is contributed by 227–229; the sequence is TSE. ATP contacts are provided by residues 258 to 260 and Val274; that span reads RRE. L-serine is bound at residue Glu281. 345–348 provides a ligand contact to ATP; the sequence is ELTS. Thr380 provides a ligand contact to L-serine.

It belongs to the class-II aminoacyl-tRNA synthetase family. Type-1 seryl-tRNA synthetase subfamily. In terms of assembly, homodimer. The tRNA molecule binds across the dimer.

It is found in the cytoplasm. The enzyme catalyses tRNA(Ser) + L-serine + ATP = L-seryl-tRNA(Ser) + AMP + diphosphate + H(+). It carries out the reaction tRNA(Sec) + L-serine + ATP = L-seryl-tRNA(Sec) + AMP + diphosphate + H(+). It functions in the pathway aminoacyl-tRNA biosynthesis; selenocysteinyl-tRNA(Sec) biosynthesis; L-seryl-tRNA(Sec) from L-serine and tRNA(Sec): step 1/1. Functionally, catalyzes the attachment of serine to tRNA(Ser). Is also able to aminoacylate tRNA(Sec) with serine, to form the misacylated tRNA L-seryl-tRNA(Sec), which will be further converted into selenocysteinyl-tRNA(Sec). This Rhodococcus jostii (strain RHA1) protein is Serine--tRNA ligase.